The sequence spans 476 residues: Aspartyl/glutamyl-tRNA(Asn/Gln) amidotransferase subunit B (476 aa).

This sequence belongs to the GatB/GatE family. GatB subfamily. Heterotrimer of A, B and C subunits.

It catalyses the reaction L-glutamyl-tRNA(Gln) + L-glutamine + ATP + H2O = L-glutaminyl-tRNA(Gln) + L-glutamate + ADP + phosphate + H(+). The enzyme catalyses L-aspartyl-tRNA(Asn) + L-glutamine + ATP + H2O = L-asparaginyl-tRNA(Asn) + L-glutamate + ADP + phosphate + 2 H(+). Functionally, allows the formation of correctly charged Asn-tRNA(Asn) or Gln-tRNA(Gln) through the transamidation of misacylated Asp-tRNA(Asn) or Glu-tRNA(Gln) in organisms which lack either or both of asparaginyl-tRNA or glutaminyl-tRNA synthetases. The reaction takes place in the presence of glutamine and ATP through an activated phospho-Asp-tRNA(Asn) or phospho-Glu-tRNA(Gln). In Lactobacillus delbrueckii subsp. bulgaricus (strain ATCC 11842 / DSM 20081 / BCRC 10696 / JCM 1002 / NBRC 13953 / NCIMB 11778 / NCTC 12712 / WDCM 00102 / Lb 14), this protein is Aspartyl/glutamyl-tRNA(Asn/Gln) amidotransferase subunit B.